The following is a 92-amino-acid chain: Promotilin (92 aa).

Positions 12-49 (RMQEKERNRGQKKSLGLQQRSEEVGSLDPTEAAEEEGK) are disordered.

This sequence belongs to the motilin family.

It localises to the secreted. In terms of biological role, plays an important role in the regulation of interdigestive gastrointestinal motility and indirectly causes rhythmic contraction of duodenal and colonic smooth muscle. This is Promotilin (MLN) from Equus caballus (Horse).